A 524-amino-acid chain; its full sequence is RNA-splicing ligase RtcB homolog 2 (524 aa).

Positions 141, 144, 249, 281, and 372 each coordinate Mn(2+). 248–252 lines the GMP pocket; sequence NHYLE. GMP is bound by residues 372 to 373, 421 to 424, Ser428, 447 to 450, and Lys523; these read HN, GGSM, and HGAG. The GMP-histidine intermediate role is filled by His447.

Belongs to the RtcB family. Catalytic component of the tRNA-splicing ligase complex. Mn(2+) is required as a cofactor.

The enzyme catalyses a 3'-end 3'-phospho-ribonucleotide-RNA + a 5'-end dephospho-ribonucleoside-RNA + GTP = a ribonucleotidyl-ribonucleotide-RNA + GMP + diphosphate. The catalysed reaction is a 3'-end 2',3'-cyclophospho-ribonucleotide-RNA + a 5'-end dephospho-ribonucleoside-RNA + GTP + H2O = a ribonucleotidyl-ribonucleotide-RNA + GMP + diphosphate + H(+). Catalytic subunit of the tRNA-splicing ligase complex that acts by directly joining spliced tRNA halves to mature-sized tRNAs by incorporating the precursor-derived splice junction phosphate into the mature tRNA as a canonical 3',5'-phosphodiester. May act as an RNA ligase with broad substrate specificity, and may function toward other RNAs. This is RNA-splicing ligase RtcB homolog 2 from Entamoeba dispar (strain ATCC PRA-260 / SAW760).